A 373-amino-acid chain; its full sequence is Anhydro-N-acetylmuramic acid kinase (373 aa).

13-20 is a binding site for ATP; that stretch reads GTSMDGID.

Belongs to the anhydro-N-acetylmuramic acid kinase family.

The enzyme catalyses 1,6-anhydro-N-acetyl-beta-muramate + ATP + H2O = N-acetyl-D-muramate 6-phosphate + ADP + H(+). It functions in the pathway amino-sugar metabolism; 1,6-anhydro-N-acetylmuramate degradation. It participates in cell wall biogenesis; peptidoglycan recycling. Its function is as follows. Catalyzes the specific phosphorylation of 1,6-anhydro-N-acetylmuramic acid (anhMurNAc) with the simultaneous cleavage of the 1,6-anhydro ring, generating MurNAc-6-P. Is required for the utilization of anhMurNAc either imported from the medium or derived from its own cell wall murein, and thus plays a role in cell wall recycling. The sequence is that of Anhydro-N-acetylmuramic acid kinase from Agrobacterium fabrum (strain C58 / ATCC 33970) (Agrobacterium tumefaciens (strain C58)).